A 224-amino-acid chain; its full sequence is Attacin-A (224 aa).

Residues 1-20 (MQKTSILIVALVALFAITEA) form the signal peptide. The propeptide occupies 21–34 (LPSLPTTGPIRVRR).

It belongs to the attacin/sarcotoxin-2 family. In terms of tissue distribution, hemolymph (at protein level).

The protein localises to the secreted. Functionally, hemolymph antibacterial protein. This chain is Attacin-A (AttA), found in Drosophila melanogaster (Fruit fly).